The chain runs to 140 residues: Lysozyme B (140 aa).

Positions 1–18 (MKAFIVLVALALAAPALG) are cleaved as a signal peptide. A C-type lysozyme domain is found at 19–140 (RTMDRCSLAR…GWLPSIDDCF (122 aa)). 4 cysteine pairs are disulfide-bonded: Cys-24–Cys-139, Cys-45–Cys-129, Cys-80–Cys-96, and Cys-92–Cys-110. Catalysis depends on residues Glu-50 and Asp-68.

This sequence belongs to the glycosyl hydrolase 22 family. In terms of tissue distribution, found in the midgut.

It carries out the reaction Hydrolysis of (1-&gt;4)-beta-linkages between N-acetylmuramic acid and N-acetyl-D-glucosamine residues in a peptidoglycan and between N-acetyl-D-glucosamine residues in chitodextrins.. Its function is as follows. Unlikely to play an active role in the humoral immune defense. May have a function in the digestion of bacteria in the food. The protein is Lysozyme B (LysB) of Drosophila melanogaster (Fruit fly).